A 483-amino-acid chain; its full sequence is Glutamyl-tRNA(Gln) amidotransferase subunit A (483 aa).

Catalysis depends on charge relay system residues Lys76 and Ser151. Ser175 acts as the Acyl-ester intermediate in catalysis.

It belongs to the amidase family. GatA subfamily. Heterotrimer of A, B and C subunits.

It carries out the reaction L-glutamyl-tRNA(Gln) + L-glutamine + ATP + H2O = L-glutaminyl-tRNA(Gln) + L-glutamate + ADP + phosphate + H(+). Functionally, allows the formation of correctly charged Gln-tRNA(Gln) through the transamidation of misacylated Glu-tRNA(Gln) in organisms which lack glutaminyl-tRNA synthetase. The reaction takes place in the presence of glutamine and ATP through an activated gamma-phospho-Glu-tRNA(Gln). This chain is Glutamyl-tRNA(Gln) amidotransferase subunit A, found in Pseudomonas syringae pv. tomato (strain ATCC BAA-871 / DC3000).